Consider the following 85-residue polypeptide: Small ribosomal subunit protein uS17 (85 aa).

The protein belongs to the universal ribosomal protein uS17 family. Part of the 30S ribosomal subunit.

Its function is as follows. One of the primary rRNA binding proteins, it binds specifically to the 5'-end of 16S ribosomal RNA. This Geobacter metallireducens (strain ATCC 53774 / DSM 7210 / GS-15) protein is Small ribosomal subunit protein uS17.